Consider the following 288-residue polypeptide: Protein PXR1 (288 aa).

In terms of domain architecture, G-patch spans 25–72; sequence QSRFGHKHLMRFGWQPGQGLGTQPVQSMKTHIKVSIKDDNLGLGAKLK. The disordered stretch occupies residues 147-258; the sequence is SYSQMEKDSS…TSIPESVSTR (112 aa). Over residues 157-166 the composition is skewed to acidic residues; the sequence is SDEESDDDED. Composition is skewed to basic residues over residues 169–185 and 195–214; these read KKHK…KKRK and KKKK…KDKK. Over residues 238 to 256 the composition is skewed to low complexity; that stretch reads RTASIESSTSATSIPESVS.

It belongs to the PINX1 family.

It is found in the nucleus. The protein localises to the nucleolus. In terms of biological role, involved in rRNA-processing at A0, A1 and A2 sites and negatively regulates telomerase. The polypeptide is Protein PXR1 (PXR1) (Candida glabrata (strain ATCC 2001 / BCRC 20586 / JCM 3761 / NBRC 0622 / NRRL Y-65 / CBS 138) (Yeast)).